The sequence spans 343 residues: Putative ALA-interacting subunit 2 (343 aa).

A helical transmembrane segment spans residues 43–63; the sequence is PISVITVFMLMGFVFIPIGLI. Residues Asn103, Asn178, Asn191, and Asn218 are each glycosylated (N-linked (GlcNAc...) asparagine). Residues 301–321 traverse the membrane as a helical segment; that stretch reads FLGITYLVVGSSSIVISIIFM.

The protein belongs to the CDC50/LEM3 family. In terms of tissue distribution, expressed in roots, leaves, stems, flowers and siliques.

The protein resides in the membrane. The chain is Putative ALA-interacting subunit 2 (ALIS2) from Arabidopsis thaliana (Mouse-ear cress).